We begin with the raw amino-acid sequence, 702 residues long: Ribosomal RNA large subunit methyltransferase K/L (702 aa).

The THUMP domain occupies 43–154 (LVYQSLMWSR…KETASIALDL (112 aa)).

It belongs to the methyltransferase superfamily. RlmKL family.

It is found in the cytoplasm. It catalyses the reaction guanosine(2445) in 23S rRNA + S-adenosyl-L-methionine = N(2)-methylguanosine(2445) in 23S rRNA + S-adenosyl-L-homocysteine + H(+). It carries out the reaction guanosine(2069) in 23S rRNA + S-adenosyl-L-methionine = N(2)-methylguanosine(2069) in 23S rRNA + S-adenosyl-L-homocysteine + H(+). Functionally, specifically methylates the guanine in position 2445 (m2G2445) and the guanine in position 2069 (m7G2069) of 23S rRNA. This is Ribosomal RNA large subunit methyltransferase K/L from Shigella flexneri serotype 5b (strain 8401).